We begin with the raw amino-acid sequence, 407 residues long: Phosphopentomutase (407 aa).

The Mn(2+) site is built by aspartate 10, aspartate 306, histidine 311, aspartate 347, histidine 348, and histidine 359.

Belongs to the phosphopentomutase family. Mn(2+) serves as cofactor.

It is found in the cytoplasm. The catalysed reaction is 2-deoxy-alpha-D-ribose 1-phosphate = 2-deoxy-D-ribose 5-phosphate. The enzyme catalyses alpha-D-ribose 1-phosphate = D-ribose 5-phosphate. It functions in the pathway carbohydrate degradation; 2-deoxy-D-ribose 1-phosphate degradation; D-glyceraldehyde 3-phosphate and acetaldehyde from 2-deoxy-alpha-D-ribose 1-phosphate: step 1/2. Functionally, isomerase that catalyzes the conversion of deoxy-ribose 1-phosphate (dRib-1-P) and ribose 1-phosphate (Rib-1-P) to deoxy-ribose 5-phosphate (dRib-5-P) and ribose 5-phosphate (Rib-5-P), respectively. The protein is Phosphopentomutase of Edwardsiella ictaluri (strain 93-146).